We begin with the raw amino-acid sequence, 298 residues long: tRNA pseudouridine synthase B (298 aa).

Asp-44 acts as the Nucleophile in catalysis.

Belongs to the pseudouridine synthase TruB family. Type 1 subfamily.

It carries out the reaction uridine(55) in tRNA = pseudouridine(55) in tRNA. Functionally, responsible for synthesis of pseudouridine from uracil-55 in the psi GC loop of transfer RNAs. The protein is tRNA pseudouridine synthase B of Mycobacteroides abscessus (strain ATCC 19977 / DSM 44196 / CCUG 20993 / CIP 104536 / JCM 13569 / NCTC 13031 / TMC 1543 / L948) (Mycobacterium abscessus).